Consider the following 501-residue polypeptide: Putative zinc metalloprotease TM_0890 (501 aa).

Residue His-17 coordinates Zn(2+). Glu-18 is an active-site residue. His-21 contributes to the Zn(2+) binding site. 4 helical membrane-spanning segments follow: residues 93 to 115 (FLITLAGPLFSILAGYLLFLPIT), 401 to 420 (VQTGQIVGVVGLAGVISAAS), 427 to 449 (VLTVVAVITISLGVLNLLPLPAL), and 474 to 496 (IIHFLGFIFLMILFLYITFLDIG). The PDZ domain maps to 96–180 (TLAGPLFSIL…LVIIRNGEKK (85 aa)).

Belongs to the peptidase M50B family. Requires Zn(2+) as cofactor.

The protein localises to the cell inner membrane. This is Putative zinc metalloprotease TM_0890 from Thermotoga maritima (strain ATCC 43589 / DSM 3109 / JCM 10099 / NBRC 100826 / MSB8).